Consider the following 780-residue polypeptide: Tricorn protease-interacting factor F3 (780 aa).

Substrate contacts are provided by residues Glu101 and Gly230–Asn234. Residue His265 participates in Zn(2+) binding. Catalysis depends on Glu266, which acts as the Proton acceptor. The Zn(2+) site is built by His269 and Glu288.

The protein belongs to the peptidase M1 family. Part of the tricorn proteolytic complex. Zn(2+) is required as a cofactor.

Its subcellular location is the cytoplasm. Its function is as follows. Proteases F1, F2 and F3 degrade oligopeptides produced by Tricorn (themselves probably produced by the proteasome), yielding free amino acids. In Thermoplasma acidophilum (strain ATCC 25905 / DSM 1728 / JCM 9062 / NBRC 15155 / AMRC-C165), this protein is Tricorn protease-interacting factor F3 (trf3).